A 307-amino-acid polypeptide reads, in one-letter code: Ribonuclease HIII (307 aa).

The RNase H type-2 domain occupies 93-307; sequence MSVIGSDEVG…ANTQKAKKWL (215 aa). Positions 99, 100, and 204 each coordinate a divalent metal cation.

This sequence belongs to the RNase HII family. RnhC subfamily. Requires Mn(2+) as cofactor. It depends on Mg(2+) as a cofactor.

It localises to the cytoplasm. The enzyme catalyses Endonucleolytic cleavage to 5'-phosphomonoester.. In terms of biological role, endonuclease that specifically degrades the RNA of RNA-DNA hybrids. The polypeptide is Ribonuclease HIII (Bacillus pumilus (strain SAFR-032)).